The primary structure comprises 247 residues: MSRLVLAIGNSRWHWGIFSRDQAPQFWDAIAPHQPFSRSDLATFLQAQDPAIVADTPIAIASVVPQQLALLPEDWPQRRLQLRDVPLTNCYPQLGLDRAIALYEAGCQAGWPVLMIDCGTAITINAGDAEGQFAGGAILPGVTLQLRSLAQGTAALPSVEISAEGDRWGMDNQSAIASGVIYGIAGALRGFIEDWRSHHPQRPIYFTGGDGELLAKLLTDLPDIRVEPHLLLHGIDRLAQAMMTDPD.

7–14 provides a ligand contact to ATP; the sequence is AIGNSRWH. Residues Tyr91 and 95–98 contribute to the substrate site; that span reads GLDR. The Proton acceptor role is filled by Asp97. Residue Asp117 participates in K(+) binding. Thr120 contributes to the ATP binding site.

It belongs to the type III pantothenate kinase family. Homodimer. The cofactor is NH4(+). K(+) serves as cofactor.

It localises to the cytoplasm. The enzyme catalyses (R)-pantothenate + ATP = (R)-4'-phosphopantothenate + ADP + H(+). It functions in the pathway cofactor biosynthesis; coenzyme A biosynthesis; CoA from (R)-pantothenate: step 1/5. Its function is as follows. Catalyzes the phosphorylation of pantothenate (Pan), the first step in CoA biosynthesis. The protein is Type III pantothenate kinase of Synechococcus sp. (strain ATCC 27144 / PCC 6301 / SAUG 1402/1) (Anacystis nidulans).